Here is a 273-residue protein sequence, read N- to C-terminus: 2,3,4,5-tetrahydropyridine-2,6-dicarboxylate N-succinyltransferase (273 aa).

Positions 104 and 141 each coordinate substrate.

This sequence belongs to the transferase hexapeptide repeat family. In terms of assembly, homotrimer.

It localises to the cytoplasm. The enzyme catalyses (S)-2,3,4,5-tetrahydrodipicolinate + succinyl-CoA + H2O = (S)-2-succinylamino-6-oxoheptanedioate + CoA. The protein operates within amino-acid biosynthesis; L-lysine biosynthesis via DAP pathway; LL-2,6-diaminopimelate from (S)-tetrahydrodipicolinate (succinylase route): step 1/3. This chain is 2,3,4,5-tetrahydropyridine-2,6-dicarboxylate N-succinyltransferase, found in Neisseria meningitidis serogroup A / serotype 4A (strain DSM 15465 / Z2491).